The primary structure comprises 129 residues: Protein GLUTAMINE DUMPER 2 (129 aa).

The Extracellular segment spans residues 1 to 34 (MQTMEGRQYNYQDSINASSSMVVPHSPWHSPVPY). Residues 35 to 55 (LFGGLAAMLALICVALLILAC) traverse the membrane as a helical segment. Topologically, residues 56-129 (SYWRLSGSAE…DHNEEEGRRG (74 aa)) are cytoplasmic. The interval 66-89 (RDLEAGDDAKPDNDTNKTKHTEMP) is disordered. The VIMAG motif lies at 94-98 (VIMAG). Positions 106–129 (ATPATRSEQSCTCGDHNEEEGRRG) are disordered. Positions 120-129 (DHNEEEGRRG) are enriched in basic and acidic residues.

It belongs to the GLUTAMINE DUMPER 1 (TC 9.B.60) family. Expressed in the vascular tissues.

The protein resides in the membrane. In terms of biological role, probable subunit of an amino acid transporter involved in the regulation of the amino acid metabolism. Stimulates amino acid export by activating nonselective amino acid facilitators. This Arabidopsis thaliana (Mouse-ear cress) protein is Protein GLUTAMINE DUMPER 2 (GDU2).